Reading from the N-terminus, the 545-residue chain is Chaperonin GroEL 1 (545 aa).

Residues 29-32 (TLGP), 86-90 (DGTTT), G413, 479-481 (DAA), and D495 contribute to the ATP site. The segment at 525 to 545 (PEPKENNPAGSGAGMGGDFDY) is disordered. A compositionally biased stretch (gly residues) spans 535-545 (SGAGMGGDFDY).

The protein belongs to the chaperonin (HSP60) family. As to quaternary structure, forms a cylinder of 14 subunits composed of two heptameric rings stacked back-to-back. Interacts with the co-chaperonin GroES.

The protein resides in the cytoplasm. The catalysed reaction is ATP + H2O + a folded polypeptide = ADP + phosphate + an unfolded polypeptide.. In terms of biological role, together with its co-chaperonin GroES, plays an essential role in assisting protein folding. The GroEL-GroES system forms a nano-cage that allows encapsulation of the non-native substrate proteins and provides a physical environment optimized to promote and accelerate protein folding. This chain is Chaperonin GroEL 1, found in Thermosynechococcus vestitus (strain NIES-2133 / IAM M-273 / BP-1).